Reading from the N-terminus, the 943-residue chain is UvrABC system protein A (943 aa).

32–39 provides a ligand contact to ATP; the sequence is GLSGSGKS. The C4-type zinc finger occupies 251-278; sequence CPVCGFTVPELEPRLFSFNAPFGSCSEC. 2 ABC transporter domains span residues 308-589 and 609-937; these read WNPI…SKSI and GNGR…HYLK. Position 641-648 (641-648) interacts with ATP; that stretch reads GVSGSGKS. The C4-type zinc-finger motif lies at 740-766; that stretch reads CEACSGDGIIKIEMHFLPDVYVACEVC.

It belongs to the ABC transporter superfamily. UvrA family. As to quaternary structure, forms a heterotetramer with UvrB during the search for lesions.

The protein localises to the cytoplasm. In terms of biological role, the UvrABC repair system catalyzes the recognition and processing of DNA lesions. UvrA is an ATPase and a DNA-binding protein. A damage recognition complex composed of 2 UvrA and 2 UvrB subunits scans DNA for abnormalities. When the presence of a lesion has been verified by UvrB, the UvrA molecules dissociate. The polypeptide is UvrABC system protein A (Streptococcus pneumoniae serotype 4 (strain ATCC BAA-334 / TIGR4)).